Reading from the N-terminus, the 113-residue chain is Cell cycle protein GpsB (113 aa).

The stretch at 36 to 68 (LDMVIKDYSTFTQEIEALQAENIRLVQELDNAP) forms a coiled coil.

It belongs to the GpsB family. As to quaternary structure, forms polymers through the coiled coil domains. Interacts with PBP1, MreC and EzrA.

It is found in the cytoplasm. In terms of biological role, divisome component that associates with the complex late in its assembly, after the Z-ring is formed, and is dependent on DivIC and PBP2B for its recruitment to the divisome. Together with EzrA, is a key component of the system that regulates PBP1 localization during cell cycle progression. Its main role could be the removal of PBP1 from the cell pole after pole maturation is completed. Also contributes to the recruitment of PBP1 to the division complex. Not essential for septum formation. The protein is Cell cycle protein GpsB of Listeria innocua serovar 6a (strain ATCC BAA-680 / CLIP 11262).